We begin with the raw amino-acid sequence, 294 residues long: Endolytic peptidoglycan transglycosylase RlpA (294 aa).

Residues 1 to 23 (MKQKIFQILTALCCIFYVMSAQA) form the signal peptide. An SPOR domain is found at 216–291 (EKYTTVYKIR…NYSKPLIVYT (76 aa)).

It belongs to the RlpA family.

Lytic transglycosylase with a strong preference for naked glycan strands that lack stem peptides. The sequence is that of Endolytic peptidoglycan transglycosylase RlpA from Pasteurella multocida (strain Pm70).